The sequence spans 335 residues: Vitamin B12 import system permease protein BtuC (335 aa).

The next 9 membrane-spanning stretches (helical) occupy residues 22–42 (LLLLTLGVAVAFVFSLSAGDV), 67–87 (LAVMLVGASLAVAGAVMQSLF), 94–114 (PGLLGVANGAGVALVLTVLLG), 117–137 (LLPVAFMSLSAIAGALVMTFL), 153–173 (LLVGVALGIVCSAVMTWAVYF), 200–220 (LVLALLPVLLWLCCQGKALNF), 243–263 (VLAIGWLVGVSVALAGVIGFV), 281–301 (YLLPGCALAGAGVLLAADVVA), and 308–328 (AELPIGVVTATLGAPLFIWLL).

This sequence belongs to the binding-protein-dependent transport system permease family. FecCD subfamily. As to quaternary structure, the complex is composed of two ATP-binding proteins (BtuD), two transmembrane proteins (BtuC) and a solute-binding protein (BtuF).

The protein localises to the cell inner membrane. Functionally, part of the ABC transporter complex BtuCDF involved in vitamin B12 import. Involved in the translocation of the substrate across the membrane. The polypeptide is Vitamin B12 import system permease protein BtuC (Serratia proteamaculans (strain 568)).